Consider the following 302-residue polypeptide: MATEEHQRLASIVKSCHESLRQLTKEYGATAAWQEHTSPRNAKQLAEYAKAMKQLAAIWETNDGKVELQARSRIKWAIDYITKYFFTEGIYLQKRQREQRLLESYRAEGKLGEVQCRLMEEPPDRLHVLDVGSCFNPFSSAPHLEVTALDLCPATEDVLQADFLKVEVVPGIREPELEEGSVRRLPASHYECVIFSLLLEYMPSAEQRLQCCLQAYDLLLPEGILVLITPDSQHVGKNAHLMKNWRYSLARIGLLRVRFEKLPHISCMVFRKAISRELSQHWASIHREEGMCEEIRIPQDDS.

The S-adenosyl-L-homocysteine site is built by R73, G132, and D150. R73, G132, D150, L151, D162, F163, and S196 together coordinate S-adenosyl-L-methionine. Positions 162, 163, and 196 each coordinate S-adenosyl-L-homocysteine.

The protein belongs to the BMT2/SAMTOR family.

Functionally, S-adenosyl-L-methionine-binding protein. It is unclear whether this protein acts as a sensor of S-adenosyl-L-methionine to signal methionine sufficiency to mTORC1. Probably acts as a S-adenosyl-L-methionine-dependent methyltransferase. The polypeptide is S-adenosylmethionine sensor upstream of mTORC1 (Drosophila melanogaster (Fruit fly)).